A 428-amino-acid polypeptide reads, in one-letter code: MANVTVVGAQWGDEGKGKIVDWLSNRADVVVRFQGGHNAGHTLVVDGKVYKLALLPSGVVQGKLSVIGNGVVVDPWHLLTEIDKIAEQGVAITPELLVLADNACLILPLHKDLDQAREAASTQKIGTTGRGIGPAYEDKVGRRAIRVADLADPEALKPKIERLLAHHGALRRGLGLPEADGAALFDQLMEVAPRVLAYAQPAWRLLDKAYKDGRKILFEGAQGALLDVDHGTYPFVTSSNTVAGQASAGSGMGPSATGYVLGIVKAYTTRVGEGPFAAELDDEVGKHLSTVGREVGVNTGRARRCGWFDAVLVRQSVAINGIHGVALTKLDVLDGLKTLKICVGYRIGDKVVDYLPAGMRDQRAAEPIYEEMEGWSESTAGARSFKDLNANAVKYVRRVEELIGAPVALLSTSPERDDTILMRDPFQG.

Residues 12-18 (GDEGKGK) and 40-42 (GHT) contribute to the GTP site. Asp13 acts as the Proton acceptor in catalysis. Mg(2+) is bound by residues Asp13 and Gly40. IMP-binding positions include 13 to 16 (DEGK), 38 to 41 (NAGH), Thr128, Arg142, Gln222, Thr237, and Arg301. His41 functions as the Proton donor in the catalytic mechanism. 297-303 (VNTGRAR) serves as a coordination point for substrate. GTP contacts are provided by residues Arg303, 329-331 (KLD), and 411-413 (STS).

The protein belongs to the adenylosuccinate synthetase family. Homodimer. Mg(2+) is required as a cofactor.

It is found in the cytoplasm. The enzyme catalyses IMP + L-aspartate + GTP = N(6)-(1,2-dicarboxyethyl)-AMP + GDP + phosphate + 2 H(+). It participates in purine metabolism; AMP biosynthesis via de novo pathway; AMP from IMP: step 1/2. Its function is as follows. Plays an important role in the de novo pathway of purine nucleotide biosynthesis. Catalyzes the first committed step in the biosynthesis of AMP from IMP. This is Adenylosuccinate synthetase from Caulobacter sp. (strain K31).